The chain runs to 359 residues: Fructose-like permease IIC component 2 (359 aa).

One can recognise a PTS EIIC type-2 domain in the interval 11–344 (TRQHLMTGVS…KSLARKNGSS (334 aa)). Transmembrane regions (helical) follow at residues 19-39 (VSHM…SVML), 60-80 (IGVA…GYSI), 99-119 (FGAG…VVHY), 135-155 (IFII…WGLG), 176-196 (SIVM…GGPV), 216-236 (VAIA…ATLI), 251-271 (AALV…AAAD), 290-310 (AALV…LPVV), and 314-334 (LGYI…VNVL).

It localises to the cell inner membrane. Its function is as follows. The phosphoenolpyruvate-dependent sugar phosphotransferase system (PTS), a major carbohydrate active -transport system, catalyzes the phosphorylation of incoming sugar substrates concomitant with their translocation across the cell membrane. The protein is Fructose-like permease IIC component 2 (frwC) of Escherichia coli (strain K12).